The sequence spans 89 residues: Large ribosomal subunit protein bL27 (89 aa).

The disordered stretch occupies residues 1-20 (MAHKKAGGSSRNGRDSAGRR).

This sequence belongs to the bacterial ribosomal protein bL27 family.

The sequence is that of Large ribosomal subunit protein bL27 from Rhizorhabdus wittichii (strain DSM 6014 / CCUG 31198 / JCM 15750 / NBRC 105917 / EY 4224 / RW1) (Sphingomonas wittichii).